Consider the following 294-residue polypeptide: 2,2',3-trihydroxybiphenyl dioxygenase (294 aa).

VOC domains follow at residues Gly-7 to Glu-120 and Gly-144 to Gly-264. Residues His-147, His-209, and Glu-260 each coordinate Fe cation.

It belongs to the extradiol ring-cleavage dioxygenase family. Monomer. Fe(2+) is required as a cofactor.

It participates in xenobiotic degradation; dibenzo-p-dioxin degradation; 2-hydroxymuconate and catechol from dibenzo-p-dioxin: step 2/3. It functions in the pathway xenobiotic degradation; dibenzofuran degradation; 2-hydroxy-2,4-pentadienoate and salicylate from dibenzofuran: step 2/3. Functionally, responsible for meta-cleavage of the first aromatic ring of 2,2',3-trihydroxybiphenyl and 2,3-dihydroxybiphenyl. 2,2',3-trihydroxydiphenyl ether, catechol, 3-methylcatechol, and 4-methylcatechol are oxidized less efficiently and 3,4-dihydroxybiphenyl is oxidized considerably less efficiently. The polypeptide is 2,2',3-trihydroxybiphenyl dioxygenase (dbfB) (Sphingomonas paucimobilis (Pseudomonas paucimobilis)).